Here is a 220-residue protein sequence, read N- to C-terminus: LHFPL tetraspan subfamily member 1 protein (220 aa).

A signal peptide spans 1 to 20 (MRSSLTMVGTLWAFLSLVTA). 2 consecutive transmembrane segments (helical) span residues 86–106 (VVTG…VLGC) and 122–142 (AAQF…PLGW). N-linked (GlcNAc...) asparagine glycosylation is present at Asn153. The chain crosses the membrane as a helical span at residues 165–185 (LGWAYYCAGGGAAAAMLICTW).

The protein belongs to the LHFP family. Widely expressed. Expressed at high levels in lung, thymus, skeletal muscle, colon and ovary.

It localises to the membrane. This Homo sapiens (Human) protein is LHFPL tetraspan subfamily member 1 protein.